Consider the following 205-residue polypeptide: MTAETPVKDENIVWHQHTVDKQFRAELKKQKPAVLWFTGLSGAGKSTVAGALENRLAELGYHTYLLDGDNVRHGLCSDLGFSEQDRRENIRRIGELAKLMADAGLIVLSAFISPHRAERQLVRDLLPEGEFIEVFVNASLEVCEGRDPKGLYKKARAGEIPNFTGIDSEYQAPINPEIDLPAGEKSVEELVELCLNELKQRRVIS.

39 to 46 (GLSGAGKS) is a binding site for ATP. S113 acts as the Phosphoserine intermediate in catalysis.

Belongs to the APS kinase family.

The enzyme catalyses adenosine 5'-phosphosulfate + ATP = 3'-phosphoadenylyl sulfate + ADP + H(+). The protein operates within sulfur metabolism; hydrogen sulfide biosynthesis; sulfite from sulfate: step 2/3. Its function is as follows. Catalyzes the synthesis of activated sulfate. The protein is Adenylyl-sulfate kinase of Vibrio parahaemolyticus serotype O3:K6 (strain RIMD 2210633).